A 153-amino-acid polypeptide reads, in one-letter code: Large ribosomal subunit protein bL9 (153 aa).

Belongs to the bacterial ribosomal protein bL9 family.

Binds to the 23S rRNA. The sequence is that of Large ribosomal subunit protein bL9 from Blochmanniella pennsylvanica (strain BPEN).